Consider the following 272-residue polypeptide: F-actin-capping protein subunit beta (272 aa).

Residue serine 2 is modified to N-acetylserine. The residue at position 2 (serine 2) is a Phosphoserine. Lysine 235 carries the N6-acetyllysine modification. A Phosphoserine modification is found at valine 263.

It belongs to the F-actin-capping protein beta subunit family. Component of the F-actin capping complex, composed of a heterodimer of an alpha and a beta subunit. Subunit of dynactin, a multiprotein complex part of a tripartite complex with dynein and a adapter, such as BICDL1, BICD2 or HOOK3. The dynactin complex is built around ACTR1A/ACTB filament and consists of an actin-related filament composed of a shoulder domain, a pointed end and a barbed end. Its length is defined by its flexible shoulder domain. The soulder is composed of 2 DCTN1 subunits, 4 DCTN2 and 2 DCTN3. The 4 DCNT2 (via N-terminus) bind the ACTR1A filament and act as molecular rulers to determine the length. The pointed end is important for binding dynein-dynactin cargo adapters. Consists of 4 subunits: ACTR10, DCNT4, DCTN5 and DCTN6. The barbed end is composed of a CAPZA1:CAPZB heterodimers, which binds ACTR1A/ACTB filament and dynactin and stabilizes dynactin. Interacts with ARHGAP17. Interaction with RCSD1/CAPZIP. Component of the WASH complex, composed of F-actin-capping protein subunit alpha (CAPZA1, CAPZA2 or CAPZA3), F-actin-capping protein subunit beta (CAPZB), WASH (WASHC1, WASH2P, WASH3P, WASH4P, WASH5P or WASH6P), WASHC2 (WASHC2A or WASHC2C), WASHC3, WASHC4 and WASHC5. Interacts with ACTG1. Directly interacts with CRACD; this interaction decreases binding to actin.

The protein resides in the cytoplasm. It localises to the cytoskeleton. It is found in the myofibril. The protein localises to the sarcomere. In terms of biological role, F-actin-capping proteins bind in a Ca(2+)-independent manner to the fast growing ends of actin filaments (barbed end) thereby blocking the exchange of subunits at these ends. Unlike other capping proteins (such as gelsolin and severin), these proteins do not sever actin filaments. Plays a role in the regulation of cell morphology and cytoskeletal organization. Forms, with CAPZB, the barbed end of the fast growing ends of actin filaments in the dynactin complex and stabilizes dynactin structure. The dynactin multiprotein complex activates the molecular motor dynein for ultra-processive transport along microtubules. This Homo sapiens (Human) protein is F-actin-capping protein subunit beta.